Consider the following 790-residue polypeptide: Nuclear cap-binding protein subunit 1 (790 aa).

The segment at 1 to 26 (MSRRRHSYENDGGQPHKRRKTSDANE) is disordered. The short motif at 3-20 (RRRHSYENDGGQPHKRRK) is the Nuclear localization signal element. S7 carries the phosphoserine modification. T21 carries the phosphothreonine modification. S22 and S201 each carry phosphoserine. The region spanning 28-240 (EDHLESLICK…CLWAQIQKLK (213 aa)) is the MIF4G domain. At K204 the chain carries N6-acetyllysine. Positions 643 to 713 (STIRKMNKHV…SEQKNLFLVI (71 aa)) form a coiled coil. K684 is covalently cross-linked (Glycyl lysine isopeptide (Lys-Gly) (interchain with G-Cter in SUMO2)). N6-acetyllysine is present on K698.

Belongs to the NCBP1 family. As to quaternary structure, component of the nuclear cap-binding complex (CBC), a heterodimer composed of NCBP1/CBP80 and NCBP2/CBP20 that interacts with m7GpppG-capped RNA. Found in a U snRNA export complex containing PHAX/RNUXA, NCBP1/CBP80, NCBP2/CBP20, RAN, XPO1 and m7G-capped RNA. Identified in a IGF2BP1-dependent mRNP granule complex containing untranslated mRNAs. Interacts with PHAX/RNUXA, SRRT/ARS2, EIF4G2, IGF2BP1, HNRNPF, HNRNPH1, KIAA0427/CTIF, PARN, DROSHA, UPF1 and ALYREF/THOC4. May interact with EIF4G1; the interaction is however controversial since it is reported by, and, but is not observed by. The large PER complex involved in the repression of transcriptional termination is composed of at least PER2, CDK9, DDX5, DHX9, NCBP1/CBP80 and POLR2A. Component of an alternative nuclear cap-binding complex (CBC) composed of NCBP1/CBP80 and NCBP3. Interacts with METTL3. Interacts with ZFC3H1 in a RNase-insensitive manner. Interacts with MTREX. Interacts with TASOR. Interacts with DHX34; the interaction is RNA-dependent. Interacts with KPNA3. In terms of processing, dephosphorylated at Thr-21 by the PNUTS-PP1 complex during RNA polymerase II transcription pause-release.

The protein resides in the nucleus. It is found in the cytoplasm. Its function is as follows. Component of the cap-binding complex (CBC), which binds cotranscriptionally to the 5'-cap of pre-mRNAs and is involved in various processes such as pre-mRNA splicing, translation regulation, nonsense-mediated mRNA decay, RNA-mediated gene silencing (RNAi) by microRNAs (miRNAs) and mRNA export. The CBC complex is involved in mRNA export from the nucleus via its interaction with ALYREF/THOC4/ALY, leading to the recruitment of the mRNA export machinery to the 5'-end of mRNA and to mRNA export in a 5' to 3' direction through the nuclear pore. The CBC complex is also involved in mediating U snRNA and intronless mRNAs export from the nucleus. The CBC complex is essential for a pioneer round of mRNA translation, before steady state translation when the CBC complex is replaced by cytoplasmic cap-binding protein eIF4E. The pioneer round of mRNA translation mediated by the CBC complex plays a central role in nonsense-mediated mRNA decay (NMD), NMD only taking place in mRNAs bound to the CBC complex, but not on eIF4E-bound mRNAs. The CBC complex enhances NMD in mRNAs containing at least one exon-junction complex (EJC) via its interaction with UPF1, promoting the interaction between UPF1 and UPF2. The CBC complex is also involved in 'failsafe' NMD, which is independent of the EJC complex, while it does not participate in Staufen-mediated mRNA decay (SMD). During cell proliferation, the CBC complex is also involved in microRNAs (miRNAs) biogenesis via its interaction with SRRT/ARS2 and is required for miRNA-mediated RNA interference. The CBC complex also acts as a negative regulator of PARN, thereby acting as an inhibitor of mRNA deadenylation. In the CBC complex, NCBP1/CBP80 does not bind directly capped RNAs (m7GpppG-capped RNA) but is required to stabilize the movement of the N-terminal loop of NCBP2/CBP20 and lock the CBC into a high affinity cap-binding state with the cap structure. Associates with NCBP3 to form an alternative cap-binding complex (CBC) which plays a key role in mRNA export and is particularly important in cellular stress situations such as virus infections. The conventional CBC with NCBP2 binds both small nuclear RNA (snRNA) and messenger (mRNA) and is involved in their export from the nucleus whereas the alternative CBC with NCBP3 does not bind snRNA and associates only with mRNA thereby playing a role only in mRNA export. NCBP1/CBP80 is required for cell growth and viability. The polypeptide is Nuclear cap-binding protein subunit 1 (Ncbp1) (Rattus norvegicus (Rat)).